The chain runs to 148 residues: Nucleoside diphosphate kinase 1 (148 aa).

Residues K9, F57, R85, T91, R102, and N112 each contribute to the ATP site. H115 functions as the Pros-phosphohistidine intermediate in the catalytic mechanism.

It belongs to the NDK family. The cofactor is Mg(2+). The N-terminus is blocked.

The enzyme catalyses a 2'-deoxyribonucleoside 5'-diphosphate + ATP = a 2'-deoxyribonucleoside 5'-triphosphate + ADP. It catalyses the reaction a ribonucleoside 5'-diphosphate + ATP = a ribonucleoside 5'-triphosphate + ADP. Functionally, major role in the synthesis of nucleoside triphosphates other than ATP. The ATP gamma phosphate is transferred to the NDP beta phosphate via a ping-pong mechanism, using a phosphorylated active-site intermediate. The chain is Nucleoside diphosphate kinase 1 (NDPK1) from Spinacia oleracea (Spinach).